Consider the following 403-residue polypeptide: ATP phosphoribosyltransferase regulatory subunit (403 aa).

It belongs to the class-II aminoacyl-tRNA synthetase family. HisZ subfamily. As to quaternary structure, heteromultimer composed of HisG and HisZ subunits.

The protein resides in the cytoplasm. Its pathway is amino-acid biosynthesis; L-histidine biosynthesis; L-histidine from 5-phospho-alpha-D-ribose 1-diphosphate: step 1/9. Functionally, required for the first step of histidine biosynthesis. May allow the feedback regulation of ATP phosphoribosyltransferase activity by histidine. The chain is ATP phosphoribosyltransferase regulatory subunit from Nostoc punctiforme (strain ATCC 29133 / PCC 73102).